Reading from the N-terminus, the 301-residue chain is Negative regulator of the PHO system (301 aa).

The 291-residue stretch at 7 to 297 (FKQLERLGNG…AQQALSHPLF (291 aa)) folds into the Protein kinase domain. ATP is bound by residues 13 to 21 (LGNGTYATV) and K36. Residue D133 is the Proton acceptor of the active site.

It belongs to the protein kinase superfamily. CMGC Ser/Thr protein kinase family. CDC2/CDKX subfamily. Interacts with a number of cyclins.

The enzyme catalyses L-seryl-[protein] + ATP = O-phospho-L-seryl-[protein] + ADP + H(+). The catalysed reaction is L-threonyl-[protein] + ATP = O-phospho-L-threonyl-[protein] + ADP + H(+). When phosphate concentrations are high it phosphorylates the PHO4 transcription factor thus establishing repression. This is Negative regulator of the PHO system (PHO85) from Eremothecium gossypii (strain ATCC 10895 / CBS 109.51 / FGSC 9923 / NRRL Y-1056) (Yeast).